A 226-amino-acid polypeptide reads, in one-letter code: Lipoprotein-releasing system ATP-binding protein LolD (226 aa).

Residues 5-226 (LRCEKISKFY…MADGVLREAS (222 aa)) enclose the ABC transporter domain. An ATP-binding site is contributed by 41–48 (GSSGSGKS).

Belongs to the ABC transporter superfamily. Lipoprotein translocase (TC 3.A.1.125) family. As to quaternary structure, the complex is composed of two ATP-binding proteins (LolD) and two transmembrane proteins (LolC and LolE).

It localises to the cell inner membrane. Its function is as follows. Part of the ABC transporter complex LolCDE involved in the translocation of mature outer membrane-directed lipoproteins, from the inner membrane to the periplasmic chaperone, LolA. Responsible for the formation of the LolA-lipoprotein complex in an ATP-dependent manner. The polypeptide is Lipoprotein-releasing system ATP-binding protein LolD (Haemophilus ducreyi (strain 35000HP / ATCC 700724)).